The primary structure comprises 450 residues: MNSDGVWLDGSGESPEVNNGEAASWVRNPDEDWFNNPPPPQHTNQNDFRFNGGFPLNPSENLLLLLQQSIDSSSSSSPLLHPFTLDAASQQQQQQQQQQEQSFLATKACIVSLLNVPTINNNTFDDFGFDSGFLGQQFHGNHQSPNSMNFTGLNHSVPDFLPAPENSSGSCGLSPLFSNRAKVLKPLQVMASSGSQPTLFQKRAAMRQSSSSKMCNSESSSEMRKSSYEREIDDTSTGIIDISGLNYESDDHNTNNNKGKKKGMPAKNLMAERRRRKKLNDRLYMLRSVVPKISKMDRASILGDAIDYLKELLQRINDLHTELESTPPSSSSLHPLTPTPQTLSYRVKEELCPSSSLPSPKGQQPRVEVRLREGKAVNIHMFCGRRPGLLLSTMRALDNLGLDVQQAVISCFNGFALDVFRAEQCQEDHDVLPEQIKAVLLDTAGYAGLV.

Disordered regions lie at residues 1-47 (MNSD…NQND), 207-231 (RQSSSSKMCNSESSSEMRKSSYERE), and 244-265 (GLNYESDDHNTNNNKGKKKGMP). A compositionally biased stretch (low complexity) spans 209-220 (SSSSKMCNSESS). Residues 221–230 (SEMRKSSYER) are compositionally biased toward basic and acidic residues. The bHLH domain maps to 263 to 312 (GMPAKNLMAERRRRKKLNDRLYMLRSVVPKISKMDRASILGDAIDYLKEL). Positions 378–450 (NIHMFCGRRP…LDTAGYAGLV (73 aa)) constitute an ACT domain.

Homodimer. Heterodimers with SPCH, MUTE, and FAMA. In terms of tissue distribution, expressed constitutively in roots, leaves, stems, and flowers. Broad expression within stomatal cell lineages of leaf epidermis, except in mature guard-cells.

It is found in the nucleus. Functionally, mediates stomatal differentiation in the epidermis probably by controlling successive roles of SPCH, MUTE, and FAMA. Functions as a dimer with SPCH during stomatal initiation. The chain is Transcription factor SCREAM2 (SCRM2) from Arabidopsis thaliana (Mouse-ear cress).